Here is a 674-residue protein sequence, read N- to C-terminus: Penicillin-binding protein activator LpoA (674 aa).

A signal peptide spans 1 to 31; it reads MLSSTFVRTKAGRSKPVRLTAVIAAALFLAG. The N-palmitoyl cysteine moiety is linked to residue Cys32. The S-diacylglycerol cysteine moiety is linked to residue Cys32. The disordered stretch occupies residues 291-349; it reads GVTPSTPVQQQQPASVPEQAAQPASTDPNANGAVSTSAPDAAPVTAAQPSAPSTAPITP. Low complexity predominate over residues 292-315; that stretch reads VTPSTPVQQQQPASVPEQAAQPAS. The span at 316-328 shows a compositional bias: polar residues; sequence TDPNANGAVSTSA. Positions 331–349 are enriched in low complexity; it reads AAPVTAAQPSAPSTAPITP.

The protein belongs to the LpoA family. Interacts with PBP1a.

It localises to the cell outer membrane. Functionally, regulator of peptidoglycan synthesis that is essential for the function of penicillin-binding protein 1A (PBP1a). This Serratia proteamaculans (strain 568) protein is Penicillin-binding protein activator LpoA.